Reading from the N-terminus, the 948-residue chain is RNA polymerase-associated protein RapA (948 aa).

Residues 164-332 (EVADRSAPRV…FARLRLLDPN (169 aa)) enclose the Helicase ATP-binding domain. Residue 177–184 (DEVGLGKT) participates in ATP binding. A DEAH box motif is present at residues 278 to 281 (DEAH). Residues 473–627 (RVDWLIDTLK…TCPTGNALQH (155 aa)) form the Helicase C-terminal domain.

This sequence belongs to the SNF2/RAD54 helicase family. RapA subfamily. Interacts with the RNAP. Has a higher affinity for the core RNAP than for the holoenzyme. Its ATPase activity is stimulated by binding to RNAP.

Functionally, transcription regulator that activates transcription by stimulating RNA polymerase (RNAP) recycling in case of stress conditions such as supercoiled DNA or high salt concentrations. Probably acts by releasing the RNAP, when it is trapped or immobilized on tightly supercoiled DNA. Does not activate transcription on linear DNA. Probably not involved in DNA repair. This chain is RNA polymerase-associated protein RapA, found in Pseudomonas putida (strain GB-1).